Here is a 141-residue protein sequence, read N- to C-terminus: Hemoglobin subunit alpha-D (141 aa).

In terms of domain architecture, Globin spans 1-141; the sequence is VLTAEDRRLL…VADVLSEKYR (141 aa). Heme b-binding residues include histidine 57 and histidine 87.

The protein belongs to the globin family. The deoxy-Hb is a heterotetramer of two alpha and two beta chains, but oxygenation results in dissociation to dimers. In terms of tissue distribution, red blood cells.

Its function is as follows. Involved in oxygen transport from the lung to the various peripheral tissues. This Erythrolamprus miliaris (South American water snake) protein is Hemoglobin subunit alpha-D (HBAD).